We begin with the raw amino-acid sequence, 426 residues long: 3-phosphoshikimate 1-carboxyvinyltransferase (426 aa).

3-phosphoshikimate is bound by residues Lys-22, Ser-23, and Arg-27. Position 22 (Lys-22) interacts with phosphoenolpyruvate. The phosphoenolpyruvate site is built by Gly-96 and Arg-124. Residues Ser-170, Ser-171, Gln-172, Ser-198, Asp-314, Asn-337, and Lys-341 each contribute to the 3-phosphoshikimate site. Gln-172 serves as a coordination point for phosphoenolpyruvate. Asp-314 (proton acceptor) is an active-site residue. The phosphoenolpyruvate site is built by Arg-345, Arg-387, and Lys-412.

The protein belongs to the EPSP synthase family. Monomer.

The protein localises to the cytoplasm. It catalyses the reaction 3-phosphoshikimate + phosphoenolpyruvate = 5-O-(1-carboxyvinyl)-3-phosphoshikimate + phosphate. It participates in metabolic intermediate biosynthesis; chorismate biosynthesis; chorismate from D-erythrose 4-phosphate and phosphoenolpyruvate: step 6/7. Its function is as follows. Catalyzes the transfer of the enolpyruvyl moiety of phosphoenolpyruvate (PEP) to the 5-hydroxyl of shikimate-3-phosphate (S3P) to produce enolpyruvyl shikimate-3-phosphate and inorganic phosphate. In Vibrio cholerae serotype O1 (strain ATCC 39541 / Classical Ogawa 395 / O395), this protein is 3-phosphoshikimate 1-carboxyvinyltransferase.